Reading from the N-terminus, the 446-residue chain is Trigger factor (446 aa).

The PPIase FKBP-type domain maps to glycine 163–leucine 248.

The protein belongs to the FKBP-type PPIase family. Tig subfamily.

The protein resides in the cytoplasm. It catalyses the reaction [protein]-peptidylproline (omega=180) = [protein]-peptidylproline (omega=0). Its function is as follows. Involved in protein export. Acts as a chaperone by maintaining the newly synthesized protein in an open conformation. Functions as a peptidyl-prolyl cis-trans isomerase. The sequence is that of Trigger factor from Natranaerobius thermophilus (strain ATCC BAA-1301 / DSM 18059 / JW/NM-WN-LF).